We begin with the raw amino-acid sequence, 496 residues long: ATP synthase subunit beta (496 aa).

155 to 162 (GGAGVGKT) serves as a coordination point for ATP.

The protein belongs to the ATPase alpha/beta chains family. F-type ATPases have 2 components, CF(1) - the catalytic core - and CF(0) - the membrane proton channel. CF(1) has five subunits: alpha(3), beta(3), gamma(1), delta(1), epsilon(1). CF(0) has three main subunits: a(1), b(2) and c(9-12). The alpha and beta chains form an alternating ring which encloses part of the gamma chain. CF(1) is attached to CF(0) by a central stalk formed by the gamma and epsilon chains, while a peripheral stalk is formed by the delta and b chains.

It localises to the cell membrane. The catalysed reaction is ATP + H2O + 4 H(+)(in) = ADP + phosphate + 5 H(+)(out). Functionally, produces ATP from ADP in the presence of a proton gradient across the membrane. The catalytic sites are hosted primarily by the beta subunits. The chain is ATP synthase subunit beta from Karelsulcia muelleri (strain GWSS) (Sulcia muelleri).